The following is a 268-amino-acid chain: Ribonuclease P protein subunit p30 (268 aa).

Ala2 carries the post-translational modification N-acetylalanine. Phosphoserine is present on Ser251.

It belongs to the eukaryotic/archaeal RNase P protein component 3 family. As to quaternary structure, component of nuclear RNase P and RNase MRP ribonucleoproteins. RNase P consists of a catalytic RNA moiety and about 10 protein subunits; POP1, POP4, POP5, POP7, RPP14, RPP21, RPP25, RPP30, RPP38 and RPP40. Within the RNase P complex, POP1, POP7 and RPP25 form the 'finger' subcomplex, POP5, RPP14, RPP40 and homodimeric RPP30 form the 'palm' subcomplex, and RPP21, POP4 and RPP38 form the 'wrist' subcomplex. All subunits of the RNase P complex interact with the catalytic RNA. Several subunits of RNase P are also part of the RNase MRP complex. RNase MRP consists of a catalytic RNA moiety and about 8 protein subunits; POP1, POP7, RPP25, RPP30, RPP38, RPP40 and possibly also POP4 and POP5.

The protein localises to the nucleus. The protein resides in the nucleolus. Its function is as follows. Component of ribonuclease P, a ribonucleoprotein complex that generates mature tRNA molecules by cleaving their 5'-ends. Also a component of the MRP ribonuclease complex, which cleaves pre-rRNA sequences. This Mus musculus (Mouse) protein is Ribonuclease P protein subunit p30 (Rpp30).